The chain runs to 396 residues: Elongation factor Tu (396 aa).

The 197-residue stretch at 10–206 (KPHVNVGTIG…ALDASIPEPK (197 aa)) folds into the tr-type G domain. A G1 region spans residues 19 to 26 (GHVDHGKT). Residue 19–26 (GHVDHGKT) coordinates GTP. Residue Thr-26 participates in Mg(2+) binding. The segment at 60-64 (GITIS) is G2. A G3 region spans residues 81–84 (DCPG). Residues 81–85 (DCPGH) and 136–139 (NKAD) each bind GTP. Residues 136-139 (NKAD) are G4. The segment at 174–176 (SAL) is G5.

This sequence belongs to the TRAFAC class translation factor GTPase superfamily. Classic translation factor GTPase family. EF-Tu/EF-1A subfamily. Monomer.

It localises to the cytoplasm. The enzyme catalyses GTP + H2O = GDP + phosphate + H(+). In terms of biological role, GTP hydrolase that promotes the GTP-dependent binding of aminoacyl-tRNA to the A-site of ribosomes during protein biosynthesis. This is Elongation factor Tu from Dichelobacter nodosus (strain VCS1703A).